A 145-amino-acid chain; its full sequence is Cytochrome b (145 aa).

A helical transmembrane segment spans residues 38–58; the sequence is FFALHFLLPFVLAALVIMHLI. The heme b site is built by H42 and H56. H61 provides a ligand contact to a ubiquinone. Residues 85 to 105 form a helical membrane-spanning segment; the sequence is FVFKDLVTVFIFFIVLSVFVF.

It belongs to the cytochrome b family. In terms of assembly, fungal cytochrome b-c1 complex contains 10 subunits; 3 respiratory subunits, 2 core proteins and 5 low-molecular weight proteins. Cytochrome b-c1 complex is a homodimer. Requires heme b as cofactor.

It localises to the mitochondrion inner membrane. Its function is as follows. Component of the ubiquinol-cytochrome c reductase complex (complex III or cytochrome b-c1 complex) that is part of the mitochondrial respiratory chain. The b-c1 complex mediates electron transfer from ubiquinol to cytochrome c. Contributes to the generation of a proton gradient across the mitochondrial membrane that is then used for ATP synthesis. The protein is Cytochrome b (cob) of Aspergillus fumigatus (Neosartorya fumigata).